Consider the following 302-residue polypeptide: N-acetylaspartate synthetase (302 aa).

Residues 46–60 (PGPAAAPPAPPPAPV) are compositionally biased toward pro residues. Positions 46–72 (PGPAAAPPAPPPAPVAQPHGGAGGAGP) are disordered. The chain crosses the membrane as a helical span at residues 121 to 141 (YALLAALCFAVSRSLLLTCLV). The region spanning 143–283 (AALLGLRYYY…VLPGMTLSLA (141 aa)) is the N-acetyltransferase domain.

Belongs to the NAT8 family. In terms of tissue distribution, expressed in brain.

The protein localises to the cytoplasm. The protein resides in the microsome membrane. It localises to the mitochondrion membrane. Its subcellular location is the endoplasmic reticulum membrane. It catalyses the reaction L-aspartate + acetyl-CoA = N-acetyl-L-aspartate + CoA + H(+). With respect to regulation, aminooxyacetic acid (AOAA) blocks its activity in both cytoplasm and mitochondria. Its function is as follows. Catalyzes the synthesis of N-acetylaspartate acid (NAA) from L-aspartate and acetyl-CoA. Promotes dopamine uptake by regulating TNF-alpha expression. Attenuates methamphetamine-induced inhibition of dopamine uptake. The protein is N-acetylaspartate synthetase of Homo sapiens (Human).